Reading from the N-terminus, the 252-residue chain is 5'-nucleotidase SurE (252 aa).

Residues D8, D9, S39, and N91 each coordinate a divalent metal cation.

Belongs to the SurE nucleotidase family. Requires a divalent metal cation as cofactor.

The protein resides in the cytoplasm. The enzyme catalyses a ribonucleoside 5'-phosphate + H2O = a ribonucleoside + phosphate. Its function is as follows. Nucleotidase that shows phosphatase activity on nucleoside 5'-monophosphates. The protein is 5'-nucleotidase SurE of Bordetella avium (strain 197N).